We begin with the raw amino-acid sequence, 403 residues long: NADH-quinone oxidoreductase subunit D (403 aa).

The protein belongs to the complex I 49 kDa subunit family. NDH-1 is composed of 14 different subunits. Subunits NuoB, C, D, E, F, and G constitute the peripheral sector of the complex.

It localises to the cell inner membrane. The enzyme catalyses a quinone + NADH + 5 H(+)(in) = a quinol + NAD(+) + 4 H(+)(out). Functionally, NDH-1 shuttles electrons from NADH, via FMN and iron-sulfur (Fe-S) centers, to quinones in the respiratory chain. The immediate electron acceptor for the enzyme in this species is believed to be ubiquinone. Couples the redox reaction to proton translocation (for every two electrons transferred, four hydrogen ions are translocated across the cytoplasmic membrane), and thus conserves the redox energy in a proton gradient. This chain is NADH-quinone oxidoreductase subunit D, found in Ruegeria sp. (strain TM1040) (Silicibacter sp.).